We begin with the raw amino-acid sequence, 572 residues long: Putative acyl-CoA synthetase CCNA_01223 (572 aa).

This sequence belongs to the ATP-dependent AMP-binding enzyme family.

It participates in lipid metabolism; sphingolipid metabolism. Involved in de novo bacterial ceramide synthesis. In Caulobacter vibrioides (strain NA1000 / CB15N) (Caulobacter crescentus), this protein is Putative acyl-CoA synthetase CCNA_01223.